We begin with the raw amino-acid sequence, 432 residues long: Serine--tRNA ligase (432 aa).

235–237 lines the L-serine pocket; sequence TSE. 266 to 268 lines the ATP pocket; the sequence is RSE. Glu289 is an L-serine binding site. Residue 353 to 356 coordinates ATP; that stretch reads EISS. Ser388 contributes to the L-serine binding site.

The protein belongs to the class-II aminoacyl-tRNA synthetase family. Type-1 seryl-tRNA synthetase subfamily. As to quaternary structure, homodimer. The tRNA molecule binds across the dimer.

Its subcellular location is the cytoplasm. It carries out the reaction tRNA(Ser) + L-serine + ATP = L-seryl-tRNA(Ser) + AMP + diphosphate + H(+). The enzyme catalyses tRNA(Sec) + L-serine + ATP = L-seryl-tRNA(Sec) + AMP + diphosphate + H(+). Its pathway is aminoacyl-tRNA biosynthesis; selenocysteinyl-tRNA(Sec) biosynthesis; L-seryl-tRNA(Sec) from L-serine and tRNA(Sec): step 1/1. Its function is as follows. Catalyzes the attachment of serine to tRNA(Ser). Is also able to aminoacylate tRNA(Sec) with serine, to form the misacylated tRNA L-seryl-tRNA(Sec), which will be further converted into selenocysteinyl-tRNA(Sec). The sequence is that of Serine--tRNA ligase from Paraburkholderia phymatum (strain DSM 17167 / CIP 108236 / LMG 21445 / STM815) (Burkholderia phymatum).